Here is a 62-residue protein sequence, read N- to C-terminus: Photosystem II reaction center protein Z (62 aa).

A run of 2 helical transmembrane segments spans residues 8 to 28 and 41 to 61; these read TVLA…VIFA and FSGA…NSFV.

This sequence belongs to the PsbZ family. As to quaternary structure, PSII is composed of 1 copy each of membrane proteins PsbA, PsbB, PsbC, PsbD, PsbE, PsbF, PsbH, PsbI, PsbJ, PsbK, PsbL, PsbM, PsbT, PsbY, PsbZ, Psb30/Ycf12, at least 3 peripheral proteins of the oxygen-evolving complex and a large number of cofactors. It forms dimeric complexes.

The protein resides in the plastid. Its subcellular location is the chloroplast thylakoid membrane. May control the interaction of photosystem II (PSII) cores with the light-harvesting antenna, regulates electron flow through the 2 photosystem reaction centers. PSII is a light-driven water plastoquinone oxidoreductase, using light energy to abstract electrons from H(2)O, generating a proton gradient subsequently used for ATP formation. The sequence is that of Photosystem II reaction center protein Z from Mesostigma viride (Green alga).